The primary structure comprises 151 residues: UPF0178 protein YaiI (151 aa).

The protein belongs to the UPF0178 family.

This chain is UPF0178 protein YaiI, found in Salmonella choleraesuis (strain SC-B67).